The following is a 101-amino-acid chain: Small ribosomal subunit protein uS14 (101 aa).

Belongs to the universal ribosomal protein uS14 family. Part of the 30S ribosomal subunit. Contacts proteins S3 and S10.

Functionally, binds 16S rRNA, required for the assembly of 30S particles and may also be responsible for determining the conformation of the 16S rRNA at the A site. This Brucella abortus (strain 2308) protein is Small ribosomal subunit protein uS14.